The sequence spans 215 residues: Vesicle-trafficking protein SEC22b-B (215 aa).

The Cytoplasmic portion of the chain corresponds to 1-190; that stretch reads MVLLTMIARL…RSDAKYLNTR (190 aa). One can recognise a Longin domain in the interval 6-119; sequence MIARLADGLP…YSFIEFDTYI (114 aa). Residues 134–194 enclose the v-SNARE coiled-coil homology domain; that stretch reads NLSNINTELQ…KYLNTRSTYA (61 aa). Residues 191–213 form a helical membrane-spanning segment; sequence STYAKLAAGGVFFIMLIVYIRFW. Residues 214-215 are Lumenal-facing; sequence WL.

The protein belongs to the synaptobrevin family. Component of 2 distinct SNARE complexes.

Its subcellular location is the endoplasmic reticulum membrane. It is found in the endoplasmic reticulum-Golgi intermediate compartment membrane. The protein resides in the golgi apparatus. It localises to the cis-Golgi network membrane. The protein localises to the trans-Golgi network membrane. Its subcellular location is the melanosome. In terms of biological role, SNARE involved in targeting and fusion of ER-derived transport vesicles with the Golgi complex as well as Golgi-derived retrograde transport vesicles with the ER. This is Vesicle-trafficking protein SEC22b-B from Danio rerio (Zebrafish).